The sequence spans 135 residues: L-ectoine synthase (135 aa).

It belongs to the ectoine synthase family.

The enzyme catalyses (2S)-4-acetamido-2-aminobutanoate = L-ectoine + H2O. Its pathway is amine and polyamine biosynthesis; ectoine biosynthesis; L-ectoine from L-aspartate 4-semialdehyde: step 3/3. In terms of biological role, catalyzes the circularization of gamma-N-acetyl-alpha,gamma-diaminobutyric acid (ADABA) to ectoine (1,4,5,6-tetrahydro-2-methyl-4-pyrimidine carboxylic acid), which is an excellent osmoprotectant. This Hyphomonas neptunium (strain ATCC 15444) protein is L-ectoine synthase.